The chain runs to 843 residues: Protein kintoun (843 aa).

4 disordered regions span residues 212–242, 371–417, 545–672, and 761–843; these read PTAEQLEPHPLQNIYPTAPPTSNPEPRVHPM, FSRE…PVHS, YTVK…GASQ, and KKNQ…DDVM. Ser376 carries the post-translational modification Phosphoserine. Residues 387–397 are compositionally biased toward acidic residues; that stretch reads PVEEEEADADL. Over residues 564-573 the composition is skewed to basic and acidic residues; sequence VKFDHNKESL. Positions 584–593 are enriched in acidic residues; sequence TEEDEVEEQH. Over residues 605–619 the composition is skewed to basic residues; the sequence is QNKKPSKKQRKRNKK. Residues 658 to 671 are compositionally biased toward polar residues; the sequence is YSECNDSSVGSGAS. Residues 761 to 775 show a composition bias toward basic residues; it reads KKNQKRRDLKLRAQQ. Ser779 carries the post-translational modification Phosphoserine.

This sequence belongs to the PIH1 family. Kintoun subfamily. In terms of assembly, interacts with Pp1alpha-96A, Pp1-87B, Pp1-13C and flw.

The protein localises to the cytoplasm. Required for cytoplasmic pre-assembly of axonemal dyneins, thereby playing a central role in motility in cilia and flagella. Involved in pre-assembly of dynein arm complexes in the cytoplasm before intraflagellar transport loads them for the ciliary compartment. This chain is Protein kintoun, found in Drosophila ananassae (Fruit fly).